Consider the following 465-residue polypeptide: GTPase Der (465 aa).

2 consecutive EngA-type G domains span residues 3–167 (PLVA…PERS) and 179–352 (IHIA…VSAL). Residues 9–16 (GRPNVGKS), 57–61 (DTGGM), 119–122 (NKID), 185–192 (GRPNVGKS), 232–236 (DTAGL), and 297–300 (NKWD) each bind GTP. The 85-residue stretch at 353 to 437 (RQFSTSEVNK…PVRFLFREGD (85 aa)) folds into the KH-like domain.

Belongs to the TRAFAC class TrmE-Era-EngA-EngB-Septin-like GTPase superfamily. EngA (Der) GTPase family. As to quaternary structure, associates with the 50S ribosomal subunit.

In terms of biological role, GTPase that plays an essential role in the late steps of ribosome biogenesis. The polypeptide is GTPase Der (Xylella fastidiosa (strain M23)).